We begin with the raw amino-acid sequence, 320 residues long: Cytochrome c biogenesis protein CcsA (320 aa).

The next 8 helical transmembrane spans lie at 9-29 (ILAHISFSLILVVTLIYWGTL), 36-56 (LSSSGGKGMIVTFLCTTGLLI), 70-90 (LYESFMFLSWSSSVFHILLEV), 97-117 (WLGAITAPSAMLTHGFATLGL), 143-163 (ILFSYATLLCGSLASIALLVI), 227-247 (AIGLGFSLSTIGTLSGAIWAN), 254-274 (WSWDPKETWALITWTIFAIYL), and 288-308 (AIVASLGFFIVWIRYLGVNLL).

The protein belongs to the CcmF/CycK/Ccl1/NrfE/CcsA family. As to quaternary structure, may interact with Ccs1.

Its subcellular location is the plastid. It localises to the chloroplast thylakoid membrane. Required during biogenesis of c-type cytochromes (cytochrome c6 and cytochrome f) at the step of heme attachment. In Pinus thunbergii (Japanese black pine), this protein is Cytochrome c biogenesis protein CcsA.